Reading from the N-terminus, the 396-residue chain is MSKLNAYFGEYGGQFVPQILVPALDQLEQEFIKAQADESFKQEFKELLQEYAGRPTALTKTRNIVKNTRTKLYLKREDLLHGGAHKTNQVLGQALLVKRMGKKEIIAETGAGQHGVATALACALLDLKCRVYMGAKDVERQSPNVFRMKLMGAEVIPVHSGSATLKDACNEALRDWSANYSKAHYLLGTAAGPHPFPTIVREFQRMIGEETKQQMLAKEGRLPDAVIACVGGGSNAIGMFADFIDEKNVKLIGVEPAGKGIETGEHGAPLKHGKTGIFFGMKAPLMQNSDGQIEESYSISAGLDFPSVGPQHAHLLAIGRAKYASATDDEALDAFKLLCKKEGIIPALESSHALAHALKLAYEDPNKEQLLVVNLSGRGDKDIFTVHDILKEKGEI.

Lys86 is modified (N6-(pyridoxal phosphate)lysine).

The protein belongs to the TrpB family. In terms of assembly, tetramer of two alpha and two beta chains. It depends on pyridoxal 5'-phosphate as a cofactor.

It catalyses the reaction (1S,2R)-1-C-(indol-3-yl)glycerol 3-phosphate + L-serine = D-glyceraldehyde 3-phosphate + L-tryptophan + H2O. The protein operates within amino-acid biosynthesis; L-tryptophan biosynthesis; L-tryptophan from chorismate: step 5/5. Functionally, the beta subunit is responsible for the synthesis of L-tryptophan from indole and L-serine. The protein is Tryptophan synthase beta chain of Francisella tularensis subsp. holarctica (strain FTNF002-00 / FTA).